A 525-amino-acid chain; its full sequence is GMP synthase [glutamine-hydrolyzing] (525 aa).

The region spanning 9 to 207 (KILILDFGSQ…IVDICGCDTL (199 aa)) is the Glutamine amidotransferase type-1 domain. The active-site Nucleophile is the C86. Residues H181 and E183 contribute to the active site. The GMPS ATP-PPase domain occupies 208 to 400 (WTPANIAQDA…LGLPYDMVYR (193 aa)). 235–241 (SGGVDSS) serves as a coordination point for ATP.

In terms of assembly, homodimer.

The enzyme catalyses XMP + L-glutamine + ATP + H2O = GMP + L-glutamate + AMP + diphosphate + 2 H(+). The protein operates within purine metabolism; GMP biosynthesis; GMP from XMP (L-Gln route): step 1/1. Catalyzes the synthesis of GMP from XMP. This chain is GMP synthase [glutamine-hydrolyzing], found in Marinomonas sp. (strain MWYL1).